We begin with the raw amino-acid sequence, 311 residues long: Tricarboxylate transport protein, mitochondrial (311 aa).

Positions 1 to 13 (MPAPRAPRALAAA) are cleaved as a propeptide — removed in mature form. Solcar repeat units lie at residues 23 to 111 (THPG…LSNH), 122 to 208 (TRGL…LRNW), and 218 to 303 (MNPL…VVKL). The next 3 helical transmembrane spans lie at 29–46 (ILAGGLAGGIEICITFPT), 86–105 (GLSSLLYGSIPKAAVRFGMF), and 129–143 (LGAGVAEAVVVVCPM). Serine 156 bears the Phosphoserine mark. Transmembrane regions (helical) follow at residues 183-202 (GLTATVLKQGSNQAIRFFVM), 224-241 (GVFGAIAGAASVFGNTPL), and 278-297 (GTVPRLGRVCLDVAIVFVIY).

It belongs to the mitochondrial carrier (TC 2.A.29) family. Possesses a short cleavable presequence, which, however, is found to be dispensable both for targeting to mitochondria and insertion into the inner membrane. However, the presequence is required to keep SLC25A1 in a soluble state and thus in an import-competent state. Mature SLC25A1 lacking the presequence is prone to aggregation.

The protein localises to the mitochondrion inner membrane. It catalyses the reaction (S)-malate(in) + citrate(out) = (S)-malate(out) + citrate(in). The enzyme catalyses D-threo-isocitrate(in) + citrate(out) = D-threo-isocitrate(out) + citrate(in). It carries out the reaction citrate(out) + succinate(in) = citrate(in) + succinate(out). The catalysed reaction is cis-aconitate(in) + citrate(out) = cis-aconitate(out) + citrate(in). It catalyses the reaction trans-aconitate(in) + citrate(out) = trans-aconitate(out) + citrate(in). The enzyme catalyses phosphoenolpyruvate(in) + citrate(out) = phosphoenolpyruvate(out) + citrate(in). It carries out the reaction maleate(in) + citrate(out) = maleate(out) + citrate(in). In terms of biological role, mitochondrial electroneutral antiporter that exports citrate from the mitochondria into the cytosol in exchange for malate. Also able to mediate the exchange of citrate for isocitrate, phosphoenolpyruvate, cis-aconitate and to a lesser extent trans-aconitate, maleate and succinate. In the cytoplasm, citrate plays important roles in fatty acid and sterol synthesis, regulation of glycolysis, protein acetylation, and other physiopathological processes. This chain is Tricarboxylate transport protein, mitochondrial (SLC25A1), found in Homo sapiens (Human).